We begin with the raw amino-acid sequence, 273 residues long: Cell division cycle-associated protein 3 (273 aa).

2 disordered regions span residues 1–231 (MGST…ALSE) and 251–273 (GGGAWEQNEDHDKENQHFALMES). Phosphoserine occurs at positions 29 and 31. A compositionally biased stretch (polar residues) spans 32–45 (AGIQRTPIQVESSP). The residue at position 37 (Thr37) is a Phosphothreonine. 2 positions are modified to phosphoserine: Ser44 and Ser67. Thr75 carries the phosphothreonine modification. An F-box-like region spans residues 90-124 (KELSEVFETEVSETEVSESISSPVLGLPQETPLSS). Ser93 carries the post-translational modification Phosphoserine. Residues 94–105 (EVFETEVSETEV) are compositionally biased toward acidic residues. 2 stretches are compositionally biased toward polar residues: residues 144 to 154 (PWSQTELNSKQ) and 164 to 175 (STETMVSGQTSD). Ser204 is subject to Phosphoserine. Thr207 is subject to Phosphothreonine. A compositionally biased stretch (polar residues) spans 210-220 (QDDNSPGTLTL). Ser214 is subject to Phosphoserine. Thr217 is modified (phosphothreonine). The KEN box signature appears at 263-265 (KEN).

In terms of assembly, interacts with SKP1. Part of a SCF (SKP1-cullin-F-box) protein ligase complex. Post-translationally, ubiquitinated and degraded by the APC/C-Cdh1 complex.

Its subcellular location is the cytoplasm. The protein resides in the cytosol. It functions in the pathway protein modification; protein ubiquitination. In terms of biological role, F-box-like protein which is required for entry into mitosis. Acts by participating in E3 ligase complexes that mediate the ubiquitination and degradation of WEE1 kinase at G2/M phase. The protein is Cell division cycle-associated protein 3 (Cdca3) of Rattus norvegicus (Rat).